The sequence spans 797 residues: Protein tamozhennic (797 aa).

In terms of domain architecture, PUB spans 79-146; sequence QNAIVAFETI…AAEDTFVLEG (68 aa). 2 disordered regions span residues 515 to 570 and 638 to 697; these read AGGI…ISDL and LSIT…SAGV. The span at 662-679 shows a compositional bias: basic and acidic residues; the sequence is EKARTLDKKSGTGRREAK. Residues 735-766 form a RanBP2-type zinc finger; sequence IVTSPNEWSCSFCTFLNPDTKRICEMCCRSKD.

In terms of assembly, homomultimer. Binds to dl and msl-1 via their nuclear localization signal (NLS). Also binds to Ran, Ran-like and mbo.

It localises to the cytoplasm. Its function is as follows. Has an essential role during oogenesis and embryogenesis, perhaps in modulating the levels of nuclear import of additional proteins. Modulates the nuclear import of dorsal (dl), Dif and male specific lethal 1 (msl-1). Negatively regulates nuclear import of dl and controls the accumulation of dl in the nucleus after immune challenge. The chain is Protein tamozhennic (tamo) from Drosophila melanogaster (Fruit fly).